Reading from the N-terminus, the 537-residue chain is Mitochondrial distribution and morphology protein 34 (537 aa).

Residues M1–L195 form the SMP-LTD domain. Disordered stretches follow at residues Y320–L339, G348–H403, G421–S493, and K516–R537. Residues R355 to R371 show a composition bias toward basic residues. Positions A378–S391 are enriched in acidic residues. Residues D425–N441 are compositionally biased toward polar residues.

The protein belongs to the MDM34 family. Component of the ER-mitochondria encounter structure (ERMES) or MDM complex, composed of MMM1, MDM10, MDM12 and MDM34.

The protein resides in the mitochondrion outer membrane. Its function is as follows. Component of the ERMES/MDM complex, which serves as a molecular tether to connect the endoplasmic reticulum (ER) and mitochondria. Components of this complex are involved in the control of mitochondrial shape and protein biogenesis, and function in nonvesicular lipid trafficking between the ER and mitochondria. MDM34 is required for the interaction of the ER-resident membrane protein MMM1 and the outer mitochondrial membrane-resident beta-barrel protein MDM10. This chain is Mitochondrial distribution and morphology protein 34, found in Chaetomium globosum (strain ATCC 6205 / CBS 148.51 / DSM 1962 / NBRC 6347 / NRRL 1970) (Soil fungus).